Consider the following 225-residue polypeptide: Endoglucanase (225 aa).

The first 15 residues, 1-15 (MKVFVVLAAIVAIAN), serve as a signal peptide directing secretion. The active-site Nucleophile is the Asp-29. 7 disulfides stabilise this stretch: Cys-30–Cys-152, Cys-31–Cys-66, Cys-35–Cys-103, Cys-50–Cys-74, Cys-104–Cys-219, Cys-106–Cys-209, and Cys-176–Cys-187. Asn-55 is a glycosylation site (N-linked (GlcNAc...) asparagine). The active-site Proton donor is Asp-138.

It belongs to the glycosyl hydrolase 45 (cellulase K) family. Post-translationally, N- and O-glycosylated. Contains hybrid- and complex-type N-glycans.

The protein resides in the secreted. The catalysed reaction is Endohydrolysis of (1-&gt;4)-beta-D-glucosidic linkages in cellulose, lichenin and cereal beta-D-glucans.. Its activity is regulated as follows. Activity is not affected by metal ions except Mn(2+), which reduces the activity by 40-50%. However, no significant change in activity in response to 1 mM EDTA. In terms of biological role, hydrolyzes carboxymethylcellulose (CMC). Also hydrolyzes lichenan and barley beta-1,4-D-glucan. CMC is hydrolyzed majorily to cellobiose (G2), cellotriose (G3) and cellotetraose (G4). Cellohexaose (G6) is hydrolyzed to G4 and G2 with traces of G3. Cellopentaose (G5) is completely hydrolyzed to G2 and G3, and G4 is partially hydrolyzed to G2. Does not hydrolyze G2 or G3. Does not hydrolyze crystalline cellulose, soluble starch, xylan, mannan or laminarin. In Cryptopygus antarcticus (Antarctic springtail), this protein is Endoglucanase.